An 89-amino-acid chain; its full sequence is Large ribosomal subunit protein bL28 (89 aa).

The protein belongs to the bacterial ribosomal protein bL28 family.

The chain is Large ribosomal subunit protein bL28 from Chlamydia trachomatis serovar A (strain ATCC VR-571B / DSM 19440 / HAR-13).